A 418-amino-acid chain; its full sequence is Light-independent protochlorophyllide reductase subunit N (418 aa).

Cys17, Cys42, and Cys103 together coordinate [4Fe-4S] cluster.

It belongs to the BchN/ChlN family. As to quaternary structure, protochlorophyllide reductase is composed of three subunits; ChlL, ChlN and ChlB. Forms a heterotetramer of two ChlB and two ChlN subunits. [4Fe-4S] cluster is required as a cofactor.

It carries out the reaction chlorophyllide a + oxidized 2[4Fe-4S]-[ferredoxin] + 2 ADP + 2 phosphate = protochlorophyllide a + reduced 2[4Fe-4S]-[ferredoxin] + 2 ATP + 2 H2O. It participates in porphyrin-containing compound metabolism; chlorophyll biosynthesis (light-independent). Its function is as follows. Component of the dark-operative protochlorophyllide reductase (DPOR) that uses Mg-ATP and reduced ferredoxin to reduce ring D of protochlorophyllide (Pchlide) to form chlorophyllide a (Chlide). This reaction is light-independent. The NB-protein (ChlN-ChlB) is the catalytic component of the complex. This is Light-independent protochlorophyllide reductase subunit N from Prochlorococcus marinus (strain MIT 9211).